The following is a 133-amino-acid chain: Protein PsiE homolog (133 aa).

4 helical membrane passes run 13–33 (LQWILNIALIILSIVLSIFLI), 55–75 (VESIIVYFLYFEFIALIIKYF), 81–101 (FPLRYFIYIGITALIRLIIVS), and 105–125 (PMETLLYAGAILILVIALYIS).

This sequence belongs to the PsiE family.

The protein resides in the cell membrane. This chain is Protein PsiE homolog, found in Bacillus cereus (strain ATCC 10987 / NRS 248).